A 491-amino-acid polypeptide reads, in one-letter code: Protein nucleotidyltransferase YdiU (491 aa).

ATP is bound by residues Gly-88, Gly-90, Arg-91, Lys-111, Asp-123, Gly-124, Arg-174, and Arg-181. The Proton acceptor role is filled by Asp-250. Mg(2+) contacts are provided by Asn-251 and Asp-260. ATP is bound at residue Asp-260.

The protein belongs to the SELO family. It depends on Mg(2+) as a cofactor. Requires Mn(2+) as cofactor.

It carries out the reaction L-seryl-[protein] + ATP = 3-O-(5'-adenylyl)-L-seryl-[protein] + diphosphate. The catalysed reaction is L-threonyl-[protein] + ATP = 3-O-(5'-adenylyl)-L-threonyl-[protein] + diphosphate. It catalyses the reaction L-tyrosyl-[protein] + ATP = O-(5'-adenylyl)-L-tyrosyl-[protein] + diphosphate. The enzyme catalyses L-histidyl-[protein] + UTP = N(tele)-(5'-uridylyl)-L-histidyl-[protein] + diphosphate. It carries out the reaction L-seryl-[protein] + UTP = O-(5'-uridylyl)-L-seryl-[protein] + diphosphate. The catalysed reaction is L-tyrosyl-[protein] + UTP = O-(5'-uridylyl)-L-tyrosyl-[protein] + diphosphate. In terms of biological role, nucleotidyltransferase involved in the post-translational modification of proteins. It can catalyze the addition of adenosine monophosphate (AMP) or uridine monophosphate (UMP) to a protein, resulting in modifications known as AMPylation and UMPylation. In Bradyrhizobium diazoefficiens (strain JCM 10833 / BCRC 13528 / IAM 13628 / NBRC 14792 / USDA 110), this protein is Protein nucleotidyltransferase YdiU.